The following is a 124-amino-acid chain: Small ribosomal subunit protein uS12 (124 aa).

Position 89 is a 3-methylthioaspartic acid (Asp-89).

It belongs to the universal ribosomal protein uS12 family. Part of the 30S ribosomal subunit. Contacts proteins S8 and S17. May interact with IF1 in the 30S initiation complex.

With S4 and S5 plays an important role in translational accuracy. In terms of biological role, interacts with and stabilizes bases of the 16S rRNA that are involved in tRNA selection in the A site and with the mRNA backbone. Located at the interface of the 30S and 50S subunits, it traverses the body of the 30S subunit contacting proteins on the other side and probably holding the rRNA structure together. The combined cluster of proteins S8, S12 and S17 appears to hold together the shoulder and platform of the 30S subunit. In Aeromonas hydrophila subsp. hydrophila (strain ATCC 7966 / DSM 30187 / BCRC 13018 / CCUG 14551 / JCM 1027 / KCTC 2358 / NCIMB 9240 / NCTC 8049), this protein is Small ribosomal subunit protein uS12.